The sequence spans 255 residues: Imidazole glycerol phosphate synthase subunit HisF (255 aa).

Residues D12 and D131 contribute to the active site.

Belongs to the HisA/HisF family. In terms of assembly, heterodimer of HisH and HisF.

It localises to the cytoplasm. It carries out the reaction 5-[(5-phospho-1-deoxy-D-ribulos-1-ylimino)methylamino]-1-(5-phospho-beta-D-ribosyl)imidazole-4-carboxamide + L-glutamine = D-erythro-1-(imidazol-4-yl)glycerol 3-phosphate + 5-amino-1-(5-phospho-beta-D-ribosyl)imidazole-4-carboxamide + L-glutamate + H(+). It functions in the pathway amino-acid biosynthesis; L-histidine biosynthesis; L-histidine from 5-phospho-alpha-D-ribose 1-diphosphate: step 5/9. IGPS catalyzes the conversion of PRFAR and glutamine to IGP, AICAR and glutamate. The HisF subunit catalyzes the cyclization activity that produces IGP and AICAR from PRFAR using the ammonia provided by the HisH subunit. The polypeptide is Imidazole glycerol phosphate synthase subunit HisF (Zymomonas mobilis subsp. mobilis (strain ATCC 31821 / ZM4 / CP4)).